A 189-amino-acid chain; its full sequence is Thymidine kinase (189 aa).

Residues 9–16 and 85–88 each bind ATP; these read GTMNSGKT and DESQ. The Proton acceptor role is filled by Glu-86. Zn(2+)-binding residues include Cys-143, Cys-146, Cys-180, and His-183.

Belongs to the thymidine kinase family. In terms of assembly, homotetramer.

The protein resides in the cytoplasm. It catalyses the reaction thymidine + ATP = dTMP + ADP + H(+). The polypeptide is Thymidine kinase (Streptococcus pyogenes serotype M1).